A 243-amino-acid polypeptide reads, in one-letter code: Small ribosomal subunit protein uS3 (243 aa).

An N-acetylalanine modification is found at Ala2. 2 positions are modified to phosphoserine: Ser6 and Ser35. One can recognise a KH type-2 domain in the interval 21–92 (LNEFLTRELA…SVELYAEKVA (72 aa)). Position 42 is a phosphothreonine (Thr42). The residue at position 62 (Lys62) is an N6-acetyllysine. Arg64, Arg65, and Arg67 each carry asymmetric dimethylarginine. A Phosphothreonine modification is found at Thr70. Lys90 is covalently cross-linked (Glycyl lysine isopeptide (Lys-Gly) (interchain with G-Cter in ubiquitin)). Ser104 is subject to Phosphoserine. Lys132 is modified (N6-succinyllysine). The tract at residues 200-243 (PKKPLPDHVSIVEPKDEILPTTPISEQKGGKPEPPAMPQPVPTA) is disordered. Residue Lys202 forms a Glycyl lysine isopeptide (Lys-Gly) (interchain with G-Cter in ubiquitin) linkage. Position 209 is a phosphoserine (Ser209). Lys214 participates in a covalent cross-link: Glycyl lysine isopeptide (Lys-Gly) (interchain with G-Cter in SUMO2); alternate. Lys214 participates in a covalent cross-link: Glycyl lysine isopeptide (Lys-Gly) (interchain with G-Cter in ubiquitin); alternate. 2 positions are modified to phosphothreonine: Thr220 and Thr221. Ser224 is modified (phosphoserine). A Glycyl lysine isopeptide (Lys-Gly) (interchain with G-Cter in SUMO2) cross-link involves residue Lys230. A compositionally biased stretch (pro residues) spans 231–243 (PEPPAMPQPVPTA). Thr242 carries the phosphothreonine modification.

This sequence belongs to the universal ribosomal protein uS3 family. As to quaternary structure, component of the 40S small ribosomal subunit. Identified in a IGF2BP1-dependent mRNP granule complex containing untranslated mRNAs. Interacts with HNRPD. Interacts with PRMT1; the interaction methylates RPS3. Interacts with SUMO1; the interaction sumoylates RPS3. Interacts with UBC9. Interacts with CDK1; the interaction phosphorylates RPS3. Interacts with PRKCD; the interaction phosphorylates RPS3. Interacts with PKB/AKT; the interaction phosphorylates RPS3. Interacts with E2F1; the interaction occurs in the absence of nerve growth factor and increases transcription of pro-apoptotic proteins BCL2L11/BIM and HRK/Dp5. Interacts with the base excision repair proteins APEX1 and OGG1; interaction with OGG1 increases OGG1 N-glycosylase activity. Interacts with UNG; the interaction increases the uracil excision activity of UNG1. Interacts with HSP90; the interaction prevents the ubiquitination and proteasome-dependent degradation of RPS3 and is suppressed by increased ROS levels. Interacts with TOM70; the interaction promotes translocation of RPS3 to the mitochondrion. Interacts (via N-terminus) with RELA (via N-terminus); the interaction enhances the DNA-binding activity of the NF-kappa-B p65-p50 complex. Interacts with NFKBIA; the interaction is direct and may bridge the interaction between RPS3 and RELA. Interacts with IKKB; the interaction phosphorylates RPS3 and enhances its translocation to the nucleus. Interacts (via KH domain) with MDM2 and TP53. Interacts with TRADD. Interacts with ASCC3. Identified in a HCV IRES-mediated translation complex, at least composed of EIF3C, IGF2BP1, RPS3 and HCV RNA-replicon. Interacts with CRY1. In terms of processing, methylation by PRMT1 is required for import into the nucleolus and for ribosome assembly. Post-translationally, sumoylation by SUMO1 enhances protein stability through increased resistance to proteolysis. Sumoylation occurs at one or more of the three consensus sites, Lys-18, Lys-214 and Lys-230. Phosphorylation at Thr-221 by CDK1 occurs mainly in G2/M phase. Phosphorylation by PRKCD occurs on a non-ribosomal-associated form which results in translocation of RPS3 to the nucleus and enhances its endonuclease activity. Phosphorylated on Ser-209 by IKKB in response to activation of the NF-kappa-B p65-p50 complex which enhances the association of RPS3 with importin-alpha and mediates the nuclear translocation of RPS3. Phosphorylation by MAPK is required for translocation to the nucleus following exposure of cells to DNA damaging agents such as hydrogen peroxide. Phosphorylation by PKB/AKT mediates RPS3 nuclear translocation, enhances RPS3 endonuclease activity and suppresses RPS3-induced neuronal apoptosis. In terms of processing, ubiquitinated; ubiquitination is prevented by interaction with HSP90 which stabilizes the protein. Monoubiquitinated at Lys-214 by RNF10 and ZNF598 when a ribosome has stalled during translation of poly(A) sequences, leading to preclude synthesis of a long poly-lysine tail and initiate the ribosome quality control (RQC) pathway to degrade the potentially detrimental aberrant nascent polypeptide. Deubiquitinated at Lys-214 by USP10, preventing degradation by the proteasome and promoting 40S ribosome subunit recycling following ribosome dissociation. Post-translationally, ufmylated by UFL1.

It is found in the cytoplasm. Its subcellular location is the nucleus. It localises to the nucleolus. The protein resides in the mitochondrion inner membrane. The protein localises to the cytoskeleton. It is found in the spindle. It carries out the reaction 2'-deoxyribonucleotide-(2'-deoxyribose 5'-phosphate)-2'-deoxyribonucleotide-DNA = a 3'-end 2'-deoxyribonucleotide-(2,3-dehydro-2,3-deoxyribose 5'-phosphate)-DNA + a 5'-end 5'-phospho-2'-deoxyribonucleoside-DNA + H(+). With respect to regulation, endonuclease activity is inhibited by MgCl2 on apurinic/apyrimidinic DNA but not on UV-irradiated DNA. Its function is as follows. Component of the small ribosomal subunit. The ribosome is a large ribonucleoprotein complex responsible for the synthesis of proteins in the cell. Has endonuclease activity and plays a role in repair of damaged DNA. Cleaves phosphodiester bonds of DNAs containing altered bases with broad specificity and cleaves supercoiled DNA more efficiently than relaxed DNA. Displays high binding affinity for 7,8-dihydro-8-oxoguanine (8-oxoG), a common DNA lesion caused by reactive oxygen species (ROS). Has also been shown to bind with similar affinity to intact and damaged DNA. Stimulates the N-glycosylase activity of the base excision protein OGG1. Enhances the uracil excision activity of UNG1. Also stimulates the cleavage of the phosphodiester backbone by APEX1. When located in the mitochondrion, reduces cellular ROS levels and mitochondrial DNA damage. Has also been shown to negatively regulate DNA repair in cells exposed to hydrogen peroxide. Plays a role in regulating transcription as part of the NF-kappa-B p65-p50 complex where it binds to the RELA/p65 subunit, enhances binding of the complex to DNA and promotes transcription of target genes. Represses its own translation by binding to its cognate mRNA. Binds to and protects TP53/p53 from MDM2-mediated ubiquitination. Involved in spindle formation and chromosome movement during mitosis by regulating microtubule polymerization. Involved in induction of apoptosis through its role in activation of CASP8. Induces neuronal apoptosis by interacting with the E2F1 transcription factor and acting synergistically with it to up-regulate pro-apoptotic proteins BCL2L11/BIM and HRK/Dp5. Interacts with TRADD following exposure to UV radiation and induces apoptosis by caspase-dependent JNK activation. This chain is Small ribosomal subunit protein uS3 (RPS3), found in Oryctolagus cuniculus (Rabbit).